The primary structure comprises 444 residues: Tubulin beta-4A chain (444 aa).

Positions 1–4 match the MREI motif motif; that stretch reads MREI. The GTP site is built by Gln11, Glu69, Ser138, Gly142, Thr143, and Gly144. A Mg(2+)-binding site is contributed by Glu69. Phosphoserine; by CDK1 is present on Ser172. GTP contacts are provided by Asn204 and Asn226. Residue Glu436 is modified to 5-glutamyl polyglutamate.

Belongs to the tubulin family. As to quaternary structure, dimer of alpha and beta chains. A typical microtubule is a hollow water-filled tube with an outer diameter of 25 nm and an inner diameter of 15 nM. Alpha-beta heterodimers associate head-to-tail to form protofilaments running lengthwise along the microtubule wall with the beta-tubulin subunit facing the microtubule plus end conferring a structural polarity. Microtubules usually have 13 protofilaments but different protofilament numbers can be found in some organisms and specialized cells. The cofactor is Mg(2+). Some glutamate residues at the C-terminus are polyglycylated, resulting in polyglycine chains on the gamma-carboxyl group. Glycylation is mainly limited to tubulin incorporated into axonemes (cilia and flagella) whereas glutamylation is prevalent in neuronal cells, centrioles, axonemes, and the mitotic spindle. Both modifications can coexist on the same protein on adjacent residues, and lowering polyglycylation levels increases polyglutamylation, and reciprocally. Cilia and flagella glycylation is required for their stability and maintenance. Flagella glycylation controls sperm motility. In terms of processing, some glutamate residues at the C-terminus are polyglutamylated, resulting in polyglutamate chains on the gamma-carboxyl group. Polyglutamylation plays a key role in microtubule severing by spastin (SPAST). SPAST preferentially recognizes and acts on microtubules decorated with short polyglutamate tails: severing activity by SPAST increases as the number of glutamates per tubulin rises from one to eight, but decreases beyond this glutamylation threshold. Glutamylation is also involved in cilia motility. Post-translationally, phosphorylated on Ser-172 by CDK1 during the cell cycle, from metaphase to telophase, but not in interphase. This phosphorylation inhibits tubulin incorporation into microtubules.

Its subcellular location is the cytoplasm. It localises to the cytoskeleton. Functionally, tubulin is the major constituent of microtubules, a cylinder consisting of laterally associated linear protofilaments composed of alpha- and beta-tubulin heterodimers. Microtubules grow by the addition of GTP-tubulin dimers to the microtubule end, where a stabilizing cap forms. Below the cap, tubulin dimers are in GDP-bound state, owing to GTPase activity of alpha-tubulin. The polypeptide is Tubulin beta-4A chain (TUBB4A) (Bos taurus (Bovine)).